We begin with the raw amino-acid sequence, 1033 residues long: MRRKTLEIYSVELDGTKDTKQLGQEEGKKCNELDLKKSSQKEELKKELDLDDHKLTSEELEQKYGTNIIRGLSSTRAAELLARDGPNALSPPKQTPEIIKFLKQMIGGFSILLWVGAILCWIAYGIQYASNQSGSLDNVYLGVVLALVVILTGIFAYYQEAKSTNIMSSFSKMIPQEALVTRDAEKKVIPAEQLVVGDIVEIKGGDQIPADIRLLFSQGCKVDNSSLTGESEPQPRSAEFTHENPLETKNIAFYSTTCLEGTATGMVINTGDRTIIGRIASLASGVGNEKTPIATEIEHFVHIVAGVAVSIGILFFIIAVSLKYRVLDSIIFLIGIIVANVPEGLLATVTVTLSLTAKRMAKKNCLVKNLEAVETLGSTSVICSDKTGTLTQNRMTVAHLWFDSQIFTADTSESQSNQAFDQSSGTWASLSKIIALCNRAEFRPGQENVPIMKRVVVGDASETALLKFSEVILGDVMEIRKRNRKVAEIPFNSTNKFQLSIHETEDPGDPRFLMVMKGAPERILEKCSTIMINGQEQPLDKNNANAFHTAYMELGGMGERVLGFCHLYLPAHEFPENYSFDVDTMNFPTSNLCFVGLLSMIDPPRSTVPDAVAKCRSAGIKVIMVTGDHPITAKAIAKSVGIISANSETVEDIAKRCNIAVEQVNKQDARAAVVTGMELKDMTPEQLDEILANYPEIVFARTSPQQKLIIVEGCQRQNAVVAVTGDGVNDSPALKKADIGIAMGIAGSDAAKNAADMVLLDDNFASIVTGVEEGRLIFDNLKKTIAYTLTKNIAELCPFLVYIIVGLPLPIGTITILFIDLGTDIIPSIALAYEKVESDIMNRKPRHKKKDRLVNHQLAIYSYLHIGLMQALGAFLVYFTVYAQQGFWPTSLIQLRVKWEQDYVNDLEDSYGQQWTRYQRKYLEWTGYTAFFVGIMVQQIADLIIRKTRRNSIFQQGLFRNKVIWVGITSQIIVALILSCGLGSITALNFTMLRVQYWFVAVPHAILIWVYDEVRKLFLRLYPGSWWDKNMYY.

Topologically, residues 1 to 96 (MRRKTLEIYS…NALSPPKQTP (96 aa)) are cytoplasmic. A helical membrane pass occupies residues 97-117 (EIIKFLKQMIGGFSILLWVGA). The Lumenal portion of the chain corresponds to 118–140 (ILCWIAYGIQYASNQSGSLDNVY). Residues 141 to 161 (LGVVLALVVILTGIFAYYQEA) form a helical membrane-spanning segment. Residues 162–297 (KSTNIMSSFS…NEKTPIATEI (136 aa)) are Cytoplasmic-facing. A helical transmembrane segment spans residues 298 to 317 (EHFVHIVAGVAVSIGILFFI). The Lumenal segment spans residues 318–329 (IAVSLKYRVLDS). A helical transmembrane segment spans residues 330-347 (IIFLIGIIVANVPEGLLA). Residues 348–781 (TVTVTLSLTA…EEGRLIFDNL (434 aa)) lie on the Cytoplasmic side of the membrane. Catalysis depends on Asp385, which acts as the 4-aspartylphosphate intermediate. Asp726 and Asp730 together coordinate Mg(2+). Residues 782 to 801 (KKTIAYTLTKNIAELCPFLV) form a helical membrane-spanning segment. At 802–811 (YIIVGLPLPI) the chain is on the lumenal side. A helical transmembrane segment spans residues 812–832 (GTITILFIDLGTDIIPSIALA). The Cytoplasmic portion of the chain corresponds to 833-852 (YEKVESDIMNRKPRHKKKDR). A helical transmembrane segment spans residues 853–875 (LVNHQLAIYSYLHIGLMQALGAF). The Lumenal portion of the chain corresponds to 876-927 (LVYFTVYAQQGFWPTSLIQLRVKWEQDYVNDLEDSYGQQWTRYQRKYLEWTG). A helical transmembrane segment spans residues 928–947 (YTAFFVGIMVQQIADLIIRK). Residues 948 to 961 (TRRNSIFQQGLFRN) lie on the Cytoplasmic side of the membrane. At Ser952 the chain carries Phosphoserine; by PKA. A helical membrane pass occupies residues 962-980 (KVIWVGITSQIIVALILSC). Topologically, residues 981–995 (GLGSITALNFTMLRV) are lumenal. A helical transmembrane segment spans residues 996-1016 (QYWFVAVPHAILIWVYDEVRK). Topologically, residues 1017–1033 (LFLRLYPGSWWDKNMYY) are cytoplasmic.

The protein belongs to the cation transport ATPase (P-type) (TC 3.A.3) family. Type IIC subfamily. As to quaternary structure, composed of two subunits: alpha (catalytic) and beta. As to expression, found in skin, kidney and distal colon.

It localises to the membrane. It carries out the reaction K(+)(out) + ATP + H2O + H(+)(in) = K(+)(in) + ADP + phosphate + 2 H(+)(out). Functionally, catalyzes the hydrolysis of ATP coupled with the exchange of H(+) and K(+) ions across the plasma membrane. Responsible for potassium absorption in various tissues. The polypeptide is Potassium-transporting ATPase alpha chain 2 (ATP12A) (Cavia porcellus (Guinea pig)).